A 128-amino-acid polypeptide reads, in one-letter code: Gastrotropin (128 aa).

Residue A2 is modified to N-acetylalanine.

The protein belongs to the calycin superfamily. Fatty-acid binding protein (FABP) family. As to expression, expressed in ileum.

It localises to the cytoplasm. The protein resides in the membrane. Binds to bile acids and is involved in enterohepatic bile acid metabolism. Required for efficient apical to basolateral transport of conjugated bile acids in ileal enterocytes. Stimulates gastric acid and pepsinogen secretion. The sequence is that of Gastrotropin (FABP6) from Oryctolagus cuniculus (Rabbit).